A 377-amino-acid chain; its full sequence is tRNA-specific 2-thiouridylase MnmA (377 aa).

ATP is bound by residues G17–S24 and M43. The interaction with target base in tRNA stretch occupies residues N103–D105. Catalysis depends on C108, which acts as the Nucleophile. C108 and C204 are joined by a disulfide. ATP is bound at residue G132. The segment at K154–Q156 is interaction with tRNA. Catalysis depends on C204, which acts as the Cysteine persulfide intermediate. The interaction with tRNA stretch occupies residues R316–Y317.

It belongs to the MnmA/TRMU family.

The protein localises to the cytoplasm. The enzyme catalyses S-sulfanyl-L-cysteinyl-[protein] + uridine(34) in tRNA + AH2 + ATP = 2-thiouridine(34) in tRNA + L-cysteinyl-[protein] + A + AMP + diphosphate + H(+). In terms of biological role, catalyzes the 2-thiolation of uridine at the wobble position (U34) of tRNA, leading to the formation of s(2)U34. The chain is tRNA-specific 2-thiouridylase MnmA from Pseudomonas fluorescens (strain ATCC BAA-477 / NRRL B-23932 / Pf-5).